The primary structure comprises 459 residues: Nuclear hormone receptor family member nhr-11 (459 aa).

Positions 2-81 form a DNA-binding region, nuclear receptor; it reads GPLCAVCESP…AGMRSELVRS (80 aa). 2 consecutive NR C4-type zinc fingers follow at residues 5–26 and 42–69; these read CAVCESPTAFTLHFGGRCCKAC and CAADDPCEIHFKFPGMRLVCRECRLRKC. Disordered stretches follow at residues 90–119 and 134–162; these read RRKDSRNNSDAAPNSNSPSTRQSSSPEEMD and DLPLTPSISHPPLPTQLMPEESSRTSSFD. Positions 97–115 are enriched in low complexity; that stretch reads NSDAAPNSNSPSTRQSSSP. The NR LBD domain occupies 188–458; it reads ENNSILQYYH…SMLHEMLNFQ (271 aa).

Belongs to the nuclear hormone receptor family.

The protein resides in the nucleus. In terms of biological role, orphan nuclear receptor. In Caenorhabditis elegans, this protein is Nuclear hormone receptor family member nhr-11 (nhr-11).